The chain runs to 201 residues: MARYTGPATRKSRRLRVDLVGGDANFERRPYPPGQAGRARIKESEYLLQLQEKQKARFTYGIMEKQFRRYYAEAHRRPGKTGDNLMVLLESRLDNVVYRAGLARTRRQARQLVSHGHFTVNGKKVNVPSFQVSQYDIIDVREKSRKMVWFDEAQEALADAVVPAWLQVVPSTLRILVHQLPERAQIEVPIQEQLIVEFYSK.

In terms of domain architecture, S4 RNA-binding spans 91 to 151 (SRLDNVVYRA…EKSRKMVWFD (61 aa)).

It belongs to the universal ribosomal protein uS4 family. In terms of assembly, part of the 30S ribosomal subunit. Contacts protein S5. The interaction surface between S4 and S5 is involved in control of translational fidelity.

One of the primary rRNA binding proteins, it binds directly to 16S rRNA where it nucleates assembly of the body of the 30S subunit. In terms of biological role, with S5 and S12 plays an important role in translational accuracy. In Corynebacterium kroppenstedtii (strain DSM 44385 / JCM 11950 / CIP 105744 / CCUG 35717), this protein is Small ribosomal subunit protein uS4.